We begin with the raw amino-acid sequence, 167 residues long: NADH-quinone oxidoreductase subunit B (167 aa).

Cysteine 48, cysteine 49, cysteine 113, and cysteine 143 together coordinate [4Fe-4S] cluster.

This sequence belongs to the complex I 20 kDa subunit family. NDH-1 is composed of 14 different subunits. Subunits NuoB, C, D, E, F, and G constitute the peripheral sector of the complex. [4Fe-4S] cluster is required as a cofactor.

The protein resides in the cell membrane. The enzyme catalyses a quinone + NADH + 5 H(+)(in) = a quinol + NAD(+) + 4 H(+)(out). Its function is as follows. NDH-1 shuttles electrons from NADH, via FMN and iron-sulfur (Fe-S) centers, to quinones in the respiratory chain. Couples the redox reaction to proton translocation (for every two electrons transferred, four hydrogen ions are translocated across the cytoplasmic membrane), and thus conserves the redox energy in a proton gradient. This chain is NADH-quinone oxidoreductase subunit B, found in Wolbachia pipientis subsp. Culex pipiens (strain wPip).